Reading from the N-terminus, the 198-residue chain is Probable host range protein 2-3 (198 aa).

Residues 153–198 (GENGYEDSTEEEDNEEDTDGVCLYCLEEEEEEDEDEDEDEDEDEEE) are disordered. Composition is skewed to acidic residues over residues 156–171 (GYEDSTEEEDNEEDTD) and 178–198 (LEEEEEEDEDEDEDEDEDEEE).

It belongs to the poxviridae C7 protein family.

Plays a role for multiplication of the virus in different cell types. This is Probable host range protein 2-3 from Rabbit fibroma virus (strain Kasza) (RFV).